A 280-amino-acid polypeptide reads, in one-letter code: MRSNVHQGHVARKRFGQNFLVDDTIIHGIVNAISPQADDVLVEIGPGLGALTDPLLERIPQMQVVELDRDLVERLRRRYGERLQVHAGDALAFDFDKLAVPGRPLRIVGNLPYNISSPLLFHLMDFADHVRDQHFMLQKEVVERMVAEPGSKAFGRLSIMLQVRYYMEHVLDVPPGAFNPPPKVDSAVVRMIPWPRHSDGRLRSPHADCDITVLGDVVTAAFSQRRKVLRNTLSFLRDQVDFDAMGFDLGRRAEEVPVGEYVELARRLGGTPSGRAGQAA.

S-adenosyl-L-methionine is bound by residues asparagine 18, leucine 20, glycine 45, glutamate 66, aspartate 89, and asparagine 110.

It belongs to the class I-like SAM-binding methyltransferase superfamily. rRNA adenine N(6)-methyltransferase family. RsmA subfamily.

The protein resides in the cytoplasm. The catalysed reaction is adenosine(1518)/adenosine(1519) in 16S rRNA + 4 S-adenosyl-L-methionine = N(6)-dimethyladenosine(1518)/N(6)-dimethyladenosine(1519) in 16S rRNA + 4 S-adenosyl-L-homocysteine + 4 H(+). In terms of biological role, specifically dimethylates two adjacent adenosines (A1518 and A1519) in the loop of a conserved hairpin near the 3'-end of 16S rRNA in the 30S particle. May play a critical role in biogenesis of 30S subunits. The sequence is that of Ribosomal RNA small subunit methyltransferase A from Cupriavidus necator (strain ATCC 17699 / DSM 428 / KCTC 22496 / NCIMB 10442 / H16 / Stanier 337) (Ralstonia eutropha).